The following is a 503-amino-acid chain: MFGDRQRPMVLVLGLGESGLAIARWCARHGCRLRIADTREAPPNLAALQAEGIDAEFVGGPFTPALLDGGIDIVGLSPGLSPLEPALAALLAAASERAIAVWGELEFFAQALRALGTSGYQPKVLAITGTNGKTTTTSLTGLLCQRAGKKVAVAGNISPAMLDRLASAIDETALPDVWVLELSSFQLETARTFAPDAAAILNITQDHLDWHGSFDAYAAAKGRIFGATTTRVLNRDDAAVMKFAPAAGAADAARTVTFGLGEPTRDGDYGLSRDNGIAWLVEAIDRDAPDETTTTRRRKRDGAHTPDIAHKRLMPVDALRIRGLHNAANALAAFALARAIDLPAAPLLHALREYRGEAHRVEVIATIDDVDYVDDSKGTNVGATVAALDGLAQKIVLIAGGDGKGQDFAPLVAPVARWCRAVMLIGRDAPALRATLADTGVPLADHATLEGAVRAAAELAEPGDAVLLSPACASLDMFRNYAHRADVFRAAVDEIAIDKGATP.

ATP is bound at residue 129 to 135 (GTNGKTT).

It belongs to the MurCDEF family.

It is found in the cytoplasm. It carries out the reaction UDP-N-acetyl-alpha-D-muramoyl-L-alanine + D-glutamate + ATP = UDP-N-acetyl-alpha-D-muramoyl-L-alanyl-D-glutamate + ADP + phosphate + H(+). Its pathway is cell wall biogenesis; peptidoglycan biosynthesis. Functionally, cell wall formation. Catalyzes the addition of glutamate to the nucleotide precursor UDP-N-acetylmuramoyl-L-alanine (UMA). The sequence is that of UDP-N-acetylmuramoylalanine--D-glutamate ligase from Burkholderia vietnamiensis (strain G4 / LMG 22486) (Burkholderia cepacia (strain R1808)).